The sequence spans 125 residues: uncharacterized protein (125 aa).

Residues 7-29 (NCMFLYVYTDVCVRLCASIFYIM) traverse the membrane as a helical segment.

The protein resides in the membrane. This is an uncharacterized protein from Saccharomyces cerevisiae (strain ATCC 204508 / S288c) (Baker's yeast).